Reading from the N-terminus, the 299-residue chain is Oxygen-dependent coproporphyrinogen-III oxidase (299 aa).

Ser92 is a substrate binding site. Mn(2+)-binding residues include His96 and His106. The Proton donor role is filled by His106. 108–110 (NVR) serves as a coordination point for substrate. The Mn(2+) site is built by His145 and His175. The interval 240 to 275 (YVEFNLVWDRGTLFGLQTGGRTESILMSMPPLVRWE) is important for dimerization. A substrate-binding site is contributed by 258-260 (GGR).

The protein belongs to the aerobic coproporphyrinogen-III oxidase family. In terms of assembly, homodimer. The cofactor is Mn(2+).

The protein resides in the cytoplasm. The catalysed reaction is coproporphyrinogen III + O2 + 2 H(+) = protoporphyrinogen IX + 2 CO2 + 2 H2O. Its pathway is porphyrin-containing compound metabolism; protoporphyrin-IX biosynthesis; protoporphyrinogen-IX from coproporphyrinogen-III (O2 route): step 1/1. In terms of biological role, involved in the heme biosynthesis. Catalyzes the aerobic oxidative decarboxylation of propionate groups of rings A and B of coproporphyrinogen-III to yield the vinyl groups in protoporphyrinogen-IX. This Escherichia coli O157:H7 protein is Oxygen-dependent coproporphyrinogen-III oxidase.